Consider the following 395-residue polypeptide: MAETFLFTSESVNEGHPDKLCDQISDAVLDACLAQDPDSKVACETCTKTNMVMVFGEITTKADVDYEKIVRDTCRNIGFTSADVGLDADNCKVLVNIEQQSPDIAQGVHGHFSKRPEEIGAGDQGHMFGYATDETPELMPLSHVLATKLGARLTEVRKNGTCAWLRPDGKTQVTVEYYNENGAMVPVRVHTVLISTQHDETVTNDEIAADLKEHVIKPVIPEKYLDEKTIFHLNPSGRFVIGGPHGDAGLTGRKIIIDTYGGWGAHGGGAFSGKDPTKVDRSGAYIVRQAAKSIVASGLARRCIVQVSYAIGVPEPLSVFVDTYGTGKIPDKEILQIVKESFDFRPGMISINLDLKRGGNSRFLKTAAYGHFGRDDPDFTWEVVKPLKWDNKVQA.

E10 contacts Mg(2+). H16 is an ATP binding site. A K(+)-binding site is contributed by E44. Residues E57 and Q100 each contribute to the L-methionine site. Residues 168–170 (DGK), 236–239 (SGRF), D247, 253–254 (RK), A270, K274, and K278 each bind ATP. Residue D247 participates in L-methionine binding. An L-methionine-binding site is contributed by K278.

Belongs to the AdoMet synthase family. In terms of assembly, homotetramer. Requires Mn(2+) as cofactor. Mg(2+) serves as cofactor. It depends on Co(2+) as a cofactor. The cofactor is K(+).

It localises to the cytoplasm. The catalysed reaction is L-methionine + ATP + H2O = S-adenosyl-L-methionine + phosphate + diphosphate. The protein operates within amino-acid biosynthesis; S-adenosyl-L-methionine biosynthesis; S-adenosyl-L-methionine from L-methionine: step 1/1. In terms of biological role, catalyzes the formation of S-adenosylmethionine from methionine and ATP. The reaction comprises two steps that are both catalyzed by the same enzyme: formation of S-adenosylmethionine (AdoMet) and triphosphate, and subsequent hydrolysis of the triphosphate. In Populus trichocarpa (Western balsam poplar), this protein is S-adenosylmethionine synthase 3 (METK3).